The chain runs to 302 residues: Quinolinate synthase (302 aa).

Residues His-24 and Ser-41 each contribute to the iminosuccinate site. Cys-86 is a binding site for [4Fe-4S] cluster. Iminosuccinate-binding positions include 112 to 114 (YVN) and Ser-129. Cys-171 lines the [4Fe-4S] cluster pocket. Residues 197 to 199 (HPE) and Thr-214 contribute to the iminosuccinate site. Cys-259 lines the [4Fe-4S] cluster pocket.

This sequence belongs to the quinolinate synthase family. Type 2 subfamily. [4Fe-4S] cluster serves as cofactor.

The protein localises to the cytoplasm. It catalyses the reaction iminosuccinate + dihydroxyacetone phosphate = quinolinate + phosphate + 2 H2O + H(+). It functions in the pathway cofactor biosynthesis; NAD(+) biosynthesis; quinolinate from iminoaspartate: step 1/1. Catalyzes the condensation of iminoaspartate with dihydroxyacetone phosphate to form quinolinate. In Dehalococcoides mccartyi (strain ATCC BAA-2266 / KCTC 15142 / 195) (Dehalococcoides ethenogenes (strain 195)), this protein is Quinolinate synthase.